Reading from the N-terminus, the 443-residue chain is Histidinol dehydrogenase (443 aa).

3 residues coordinate NAD(+): Tyr141, Gln203, and Asn226. Substrate-binding residues include Ser249, Gln271, and His274. Residues Gln271 and His274 each contribute to the Zn(2+) site. Catalysis depends on proton acceptor residues Glu339 and His340. Substrate-binding residues include His340, Asp373, Glu427, and His432. Residue Asp373 coordinates Zn(2+). His432 is a binding site for Zn(2+).

It belongs to the histidinol dehydrogenase family. Requires Zn(2+) as cofactor.

The catalysed reaction is L-histidinol + 2 NAD(+) + H2O = L-histidine + 2 NADH + 3 H(+). The protein operates within amino-acid biosynthesis; L-histidine biosynthesis; L-histidine from 5-phospho-alpha-D-ribose 1-diphosphate: step 9/9. Functionally, catalyzes the sequential NAD-dependent oxidations of L-histidinol to L-histidinaldehyde and then to L-histidine. The protein is Histidinol dehydrogenase of Chlorobium luteolum (strain DSM 273 / BCRC 81028 / 2530) (Pelodictyon luteolum).